The chain runs to 370 residues: uncharacterized protein (370 aa).

The signal sequence occupies residues 1–27 (MSSAANEGCVYLFIVVLRLSSFSCVNS). Residues N59, N98, and N126 are each glycosylated (N-linked (GlcNAc...) asparagine). Disordered stretches follow at residues 81–101 (SRSH…NTTA) and 123–167 (LSEN…CHQP). Acidic residues predominate over residues 139-148 (HDDDDDDDLE). N171, N221, N230, and N262 each carry an N-linked (GlcNAc...) asparagine glycan.

This is an uncharacterized protein from Saccharomyces cerevisiae (strain ATCC 204508 / S288c) (Baker's yeast).